We begin with the raw amino-acid sequence, 181 residues long: Adenine phosphoribosyltransferase (181 aa).

This sequence belongs to the purine/pyrimidine phosphoribosyltransferase family. As to quaternary structure, homodimer.

The protein resides in the cytoplasm. It carries out the reaction AMP + diphosphate = 5-phospho-alpha-D-ribose 1-diphosphate + adenine. Its pathway is purine metabolism; AMP biosynthesis via salvage pathway; AMP from adenine: step 1/1. In terms of biological role, catalyzes a salvage reaction resulting in the formation of AMP, that is energically less costly than de novo synthesis. The chain is Adenine phosphoribosyltransferase from Methylobacterium sp. (strain 4-46).